The following is a 486-amino-acid chain: Probable glycine dehydrogenase (decarboxylating) subunit 2 (486 aa).

Residues 1–26 (MLIFESSRPGRQARAQAPKPTAATND) are disordered. N6-(pyridoxal phosphate)lysine is present on K264.

Belongs to the GcvP family. C-terminal subunit subfamily. The glycine cleavage system is composed of four proteins: P, T, L and H. In this organism, the P 'protein' is a heterodimer of two subunits. It depends on pyridoxal 5'-phosphate as a cofactor.

It catalyses the reaction N(6)-[(R)-lipoyl]-L-lysyl-[glycine-cleavage complex H protein] + glycine + H(+) = N(6)-[(R)-S(8)-aminomethyldihydrolipoyl]-L-lysyl-[glycine-cleavage complex H protein] + CO2. The glycine cleavage system catalyzes the degradation of glycine. The P protein binds the alpha-amino group of glycine through its pyridoxal phosphate cofactor; CO(2) is released and the remaining methylamine moiety is then transferred to the lipoamide cofactor of the H protein. This Nitrosococcus oceani (strain ATCC 19707 / BCRC 17464 / JCM 30415 / NCIMB 11848 / C-107) protein is Probable glycine dehydrogenase (decarboxylating) subunit 2.